The primary structure comprises 38 residues: Large ribosomal subunit protein bL36 (38 aa).

It belongs to the bacterial ribosomal protein bL36 family.

This Prochlorococcus marinus (strain SARG / CCMP1375 / SS120) protein is Large ribosomal subunit protein bL36.